The following is a 476-amino-acid chain: Cysteine--tRNA ligase (476 aa).

Cysteine 28 contributes to the Zn(2+) binding site. The 'HIGH' region signature appears at 30–40 (PTVYDHTHLGH). Zn(2+)-binding residues include cysteine 208, histidine 233, and glutamate 237. The 'KMSKS' region motif lies at 265-269 (KMSKS). Lysine 268 is a binding site for ATP.

Belongs to the class-I aminoacyl-tRNA synthetase family. It depends on Zn(2+) as a cofactor.

It is found in the cytoplasm. The enzyme catalyses tRNA(Cys) + L-cysteine + ATP = L-cysteinyl-tRNA(Cys) + AMP + diphosphate. The polypeptide is Cysteine--tRNA ligase (Methanococcus maripaludis (strain C6 / ATCC BAA-1332)).